The primary structure comprises 179 residues: Large ribosomal subunit protein uL6 (179 aa).

Positions 154–169 are enriched in basic and acidic residues; that stretch reads EPYKGKGVKYEHEQIR. The segment at 154–179 is disordered; the sequence is EPYKGKGVKYEHEQIRRKAGKSGGKK. The segment covering 170 to 179 has biased composition (basic residues); the sequence is RKAGKSGGKK.

This sequence belongs to the universal ribosomal protein uL6 family. Part of the 50S ribosomal subunit.

In terms of biological role, this protein binds to the 23S rRNA, and is important in its secondary structure. It is located near the subunit interface in the base of the L7/L12 stalk, and near the tRNA binding site of the peptidyltransferase center. This is Large ribosomal subunit protein uL6 from Oleidesulfovibrio alaskensis (strain ATCC BAA-1058 / DSM 17464 / G20) (Desulfovibrio alaskensis).